The chain runs to 208 residues: Uracil phosphoribosyltransferase (208 aa).

Residues R78, R103, and 130 to 138 (DPMLATGGT) each bind 5-phospho-alpha-D-ribose 1-diphosphate. Uracil is bound by residues I193 and 198–200 (GDA). D199 serves as a coordination point for 5-phospho-alpha-D-ribose 1-diphosphate.

It belongs to the UPRTase family. The cofactor is Mg(2+).

The enzyme catalyses UMP + diphosphate = 5-phospho-alpha-D-ribose 1-diphosphate + uracil. The protein operates within pyrimidine metabolism; UMP biosynthesis via salvage pathway; UMP from uracil: step 1/1. Its activity is regulated as follows. Allosterically activated by GTP. Functionally, catalyzes the conversion of uracil and 5-phospho-alpha-D-ribose 1-diphosphate (PRPP) to UMP and diphosphate. This Desulforapulum autotrophicum (strain ATCC 43914 / DSM 3382 / VKM B-1955 / HRM2) (Desulfobacterium autotrophicum) protein is Uracil phosphoribosyltransferase.